The sequence spans 572 residues: Sorting nexin 2B (572 aa).

Disordered stretches follow at residues 1-97 (MMGS…SSYL) and 114-136 (SEINGSEDGHSQSSDSLSRSPSS). Positions 9-30 (ESHLHSSKEEMEKLFLREDGDP) are enriched in basic and acidic residues. The span at 32 to 53 (TKSNVNGDKSNSNYRSAMSTLF) shows a compositional bias: polar residues. Positions 124–136 (SQSSDSLSRSPSS) are enriched in low complexity. Ser-133 is modified (phosphoserine). Positions 147–266 (SNPQKEQEAT…KVFLQAQGKL (120 aa)) constitute a PX domain. A 1,2-diacyl-sn-glycero-3-phospho-(1D-myo-inositol-3-phosphate) contacts are provided by Arg-190, Lys-216, and Arg-233. In terms of domain architecture, BAR spans 318 to 572 (LRQSVSNDWG…ETRQYDRESS (255 aa)).

Belongs to the sorting nexin family. Homodimer. Heterodimer with SNX1 or SNX2B. Component of the retromer complex which consists of VPS29 (MAG1), VPS26 (VPS26A or VPS26B), VPS35 (VPS35A or VPS35B or VPS35C), VPS5/17 (SNX1 or SNX2A or SNX2B). Ubiquitously expressed.

The protein resides in the cytoplasm. It localises to the endosome membrane. Its subcellular location is the prevacuolar compartment membrane. The protein localises to the golgi apparatus. It is found in the trans-Golgi network membrane. Plays a role in vesicular protein sorting. Acts at the crossroads between the secretory and endocytic pathways. Is involved in the endosome to vacuole protein transport and, as component of the membrane-associated retromer complex, is also involved in endosome-to-Golgi retrograde transport. The polypeptide is Sorting nexin 2B (SNX2B) (Arabidopsis thaliana (Mouse-ear cress)).